The sequence spans 1220 residues: DNA-directed RNA polymerase subunit beta (1220 aa).

The protein belongs to the RNA polymerase beta chain family. In terms of assembly, the RNAP catalytic core consists of 2 alpha, 1 beta, 1 beta' and 1 omega subunit. When a sigma factor is associated with the core the holoenzyme is formed, which can initiate transcription.

The enzyme catalyses RNA(n) + a ribonucleoside 5'-triphosphate = RNA(n+1) + diphosphate. Functionally, DNA-dependent RNA polymerase catalyzes the transcription of DNA into RNA using the four ribonucleoside triphosphates as substrates. The chain is DNA-directed RNA polymerase subunit beta from Mesomycoplasma hyopneumoniae (strain J / ATCC 25934 / NCTC 10110) (Mycoplasma hyopneumoniae).